Consider the following 1194-residue polypeptide: Pre-mRNA-processing ATP-dependent RNA helicase prp-5 (1194 aa).

Disordered stretches follow at residues 1–201 (MARL…KEAK), 224–248 (AVVG…ASPA), and 452–484 (ASGE…DDYG). Basic and acidic residues-rich tracts occupy residues 21 to 37 (RKDD…GPVD) and 44 to 154 (SPID…RDQP). A compositionally biased stretch (polar residues) spans 156–176 (PGNTTAKENEPAKSTPTQPQT). Residues 177 to 186 (EAEKKAERLR) show a composition bias toward basic and acidic residues. Positions 232–248 (SPAPASPAAAESPASPA) are enriched in low complexity. Residues 455-469 (EESHSKADTLTEKKN) are compositionally biased toward basic and acidic residues. The short motif at 561–589 (QKWSQCGLTRPILDTIESLGFEKPTPIQM) is the Q motif element. The Helicase ATP-binding domain occupies 592–770 (LPVIMSGRDV…KKVLRDPVEI (179 aa)). 605-612 (AKTGSGKT) is a binding site for ATP. The DEAD box motif lies at 718-721 (DEAD). Residues 797–945 (RLLELLGELY…PVPDRLNEMR (149 aa)) enclose the Helicase C-terminal domain. 2 disordered regions span residues 952-1011 (VKAG…DKTK) and 1025-1056 (DASK…SGGA). 3 stretches are compositionally biased toward basic and acidic residues: residues 967–980 (GLEK…AARM), 997–1011 (EDAP…DKTK), and 1025–1036 (DASKAETEDKHA).

This sequence belongs to the DEAD box helicase family. DDX46/PRP5 subfamily.

Its subcellular location is the nucleus. The enzyme catalyses ATP + H2O = ADP + phosphate + H(+). Its function is as follows. ATP-dependent RNA helicase involved spliceosome assembly and in nuclear splicing. Catalyzes an ATP-dependent conformational change of U2 snRNP. Bridges U1 and U2 snRNPs and enables stable U2 snRNP association with intron RNA. This Neurospora crassa (strain ATCC 24698 / 74-OR23-1A / CBS 708.71 / DSM 1257 / FGSC 987) protein is Pre-mRNA-processing ATP-dependent RNA helicase prp-5 (prp-5).